A 46-amino-acid chain; its full sequence is Homeobox protein Hox-D4 (46 aa).

The segment at residues 1-46 is a DNA-binding region (homeobox); that stretch reads VNSNYTGGEPKRSRTAYTRQQVLELEKEFLFNRYLTRRRRIQHTLT.

The protein belongs to the Antp homeobox family. Deformed subfamily. In terms of assembly, forms a DNA-binding heterodimer with transcription factor PBX1.

The protein localises to the nucleus. In terms of biological role, sequence-specific transcription factor which is part of a developmental regulatory system that provides cells with specific positional identities on the anterior-posterior axis. This chain is Homeobox protein Hox-D4 (HOXD4), found in Ovis aries (Sheep).